A 716-amino-acid chain; its full sequence is Phospholipid phosphatase-related protein type 3 (716 aa).

3 helical membrane passes run 18 to 38, 70 to 90, and 131 to 151; these read LPCFYFVELPIVASSVVSLYF, LIPLLMLLSLAFAAPAASIMV, and FVGVHVFGLCATALVTDVIQL. Asn-167 is a glycosylation site (N-linked (GlcNAc...) asparagine). Helical transmembrane passes span 205–225, 231–251, and 261–281; these read HATLSAFAAVYVSMYFNSVIS, LKPILVFAFAIAAGVCGLTQI, and VYAGFLIGAGIAAYLACHAVG. The tract at residues 311–334 is disordered; that stretch reads SMYQQNKSVSTDELGPPGRLEGVP. Residues 312 to 321 show a composition bias toward polar residues; that stretch reads MYQQNKSVST. Asn-316 carries an N-linked (GlcNAc...) asparagine glycan. Phosphoserine is present on residues Ser-320 and Ser-351. Thr-374 is subject to Phosphothreonine. Residues 416–488 form a disordered region; it reads GRGLGLPDEA…RVILPPRPGP (73 aa). Ser-426 carries the post-translational modification Phosphoserine. Residues 437–460 show a composition bias toward acidic residues; the sequence is VAEEEEEEEEEEEEEEEEEEEEEG. Position 506 is a phosphoserine (Ser-506). The segment at 548–589 is disordered; sequence AMSKAAGGPKAETASSSSASSDSSQYRSPSDRDSASIVTIDA. Low complexity predominate over residues 562–575; sequence SSSSASSDSSQYRS. Ser-641 bears the Phosphoserine mark. The tract at residues 664 to 694 is disordered; that stretch reads GEGLPPPGASEGALGAGSRESTLRRQVGALG.

It belongs to the PA-phosphatase related phosphoesterase family.

Its subcellular location is the membrane. The polypeptide is Phospholipid phosphatase-related protein type 3 (Rattus norvegicus (Rat)).